Consider the following 577-residue polypeptide: Isocitrate dehydrogenase kinase/phosphatase (577 aa).

Residues 318 to 324 (APGVRGM) and Lys-339 contribute to the ATP site. The active site involves Asp-374.

This sequence belongs to the AceK family.

It is found in the cytoplasm. It carries out the reaction L-seryl-[isocitrate dehydrogenase] + ATP = O-phospho-L-seryl-[isocitrate dehydrogenase] + ADP + H(+). Bifunctional enzyme which can phosphorylate or dephosphorylate isocitrate dehydrogenase (IDH) on a specific serine residue. This is a regulatory mechanism which enables bacteria to bypass the Krebs cycle via the glyoxylate shunt in response to the source of carbon. When bacteria are grown on glucose, IDH is fully active and unphosphorylated, but when grown on acetate or ethanol, the activity of IDH declines drastically concomitant with its phosphorylation. This chain is Isocitrate dehydrogenase kinase/phosphatase, found in Pseudomonas aeruginosa (strain UCBPP-PA14).